A 394-amino-acid polypeptide reads, in one-letter code: Protein NDRG1 (394 aa).

Position 2 is an N-acetylserine (S2). 3 positions are modified to phosphoserine: S2, S319, and S326. The segment at 325 to 394 (RSRTASGSSV…AGPKSMEVSC (70 aa)) is disordered. Positions 327–339 (RTASGSSVTSLEG) are enriched in polar residues. T328 carries the post-translational modification Phosphothreonine. Phosphoserine is present on S330. Phosphoserine; by SGK1 is present on S332. Residue S333 is modified to Phosphoserine. Position 335 is a phosphothreonine (T335). S336 bears the Phosphoserine mark. 3 consecutive repeat copies span residues 339-348 (GTRSRSHTSE), 349-358 (GPRSRSHTSE), and 359-368 (GSRSRSHTSE). Positions 339 to 368 (GTRSRSHTSEGPRSRSHTSEGSRSRSHTSE) are 3 X 10 AA tandem repeats of G-[PST]-R-S-R-S-H-T-S-E. T340 carries the post-translational modification Phosphothreonine. At S342 the chain carries Phosphoserine. Positions 345-371 (HTSEGPRSRSHTSEGSRSRSHTSEDAR) are enriched in basic and acidic residues. T346 is modified (phosphothreonine). Phosphoserine is present on S352. Residue T356 is modified to Phosphothreonine; by SGK1. Phosphoserine is present on residues S362 and S364. Phosphothreonine is present on residues T366 and T375. Residues 374 to 386 (ITPSSGATGNNAG) show a composition bias toward polar residues.

This sequence belongs to the NDRG family. As to quaternary structure, interacts with RAB4A (membrane-bound form); the interaction involves NDRG1 in vesicular recycling of CDH1. Interacts with APOA1, APOA2, PRA1 and RTN1. Under stress conditions, phosphorylated in the C-terminal on many serine and threonine residues. Phosphorylated in vitro by PKA. Phosphorylation enhanced by increased intracellular cAMP levels. Homocysteine induces dephosphorylation. Phosphorylation by SGK1 is cell cycle dependent.

Its subcellular location is the cytoplasm. It localises to the cytosol. It is found in the cytoskeleton. The protein resides in the microtubule organizing center. The protein localises to the centrosome. Its subcellular location is the nucleus. It localises to the cell membrane. Functionally, stress-responsive protein involved in hormone responses, cell growth, and differentiation. Acts as a tumor suppressor in many cell types. Necessary but not sufficient for p53/TP53-mediated caspase activation and apoptosis. Has a role in cell trafficking notably of the Schwann cell and is necessary for the maintenance and development of the peripheral nerve myelin sheath. Required for vesicular recycling of CDH1 and TF. May also function in lipid trafficking. Protects cells from spindle disruption damage. Functions in p53/TP53-dependent mitotic spindle checkpoint. Regulates microtubule dynamics and maintains euploidy. This is Protein NDRG1 (Ndrg1) from Rattus norvegicus (Rat).